A 202-amino-acid chain; its full sequence is Zinc metalloproteinase barnettlysin-1 (202 aa).

Residues 6-200 enclose the Peptidase M12B domain; the sequence is RYVELFIVVD…MKENPQCILN (195 aa). Ca(2+)-binding residues include Glu-9 and Asp-93. 3 disulfide bridges follow: Cys-117/Cys-197, Cys-157/Cys-181, and Cys-159/Cys-164. His-142 is a binding site for Zn(2+). The active site involves Glu-143. Residues His-146 and His-152 each contribute to the Zn(2+) site. 2 residues coordinate Ca(2+): Cys-197 and Asn-200.

As to quaternary structure, monomer. The cofactor is Zn(2+). In terms of tissue distribution, expressed by the venom gland.

It localises to the secreted. Its function is as follows. Non-hemorrhagic metalloproteinase that hydrolyzes the alpha chains of fibrinogen and fibrin but has no activity on beta- and gamma-chains. Cleaves X-Leu bonds. Inhibits platelet aggregation induced by the von Willebrand factor (VWF) (IC(50) is 1.4 uM) and type I collagen (IC(50) is 3.2 uM). Acts by cleaving the vWF and its receptor GPIb, and by cleaving the collagen-binding Alpha-2A domain of the collagen receptor alpha-2/beta-1 integrin (ITGA2/ITGB1). Also degrades the extracellular matrix protein fibronectin (FN1), but has no effect on laminin and type I collagen. The protein is Zinc metalloproteinase barnettlysin-1 of Bothrops barnetti (Barnett's lancehead).